The following is a 1941-amino-acid chain: Diacylglycerol kinase eta (1941 aa).

The 94-residue stretch at 93-186 folds into the PH domain; the sequence is SIIKEGYLLK…WLGSLKAATA (94 aa). 2 consecutive Phorbol-ester/DAG-type zinc fingers follow at residues 206–256 and 279–330; these read HHHW…IANC and PHQW…AIAC. Residues 361–497 enclose the DAGKc domain; that stretch reads GNFSPLLVFV…DRWSIMVFEK (137 aa). Disordered stretches follow at residues 1030–1068, 1132–1164, 1215–1257, and 1276–1295; these read TTTL…SPPR, CNSN…ETPT, LESA…PSSS, and RRHS…KDKD. Residues 1133–1155 show a composition bias toward low complexity; that stretch reads NSNNNSNNNSNSNSNNNNHNDGN. One can recognise an SAM domain in the interval 1878-1941; sequence WSVNEVVTWL…LQAIKDLSEN (64 aa).

This sequence belongs to the eukaryotic diacylglycerol kinase family.

It is found in the cytoplasm. The enzyme catalyses a 1,2-diacyl-sn-glycerol + ATP = a 1,2-diacyl-sn-glycero-3-phosphate + ADP + H(+). Functionally, phosphorylates diacylglycerol (DAG) to generate phosphatidic acid (PA). The polypeptide is Diacylglycerol kinase eta (Drosophila grimshawi (Hawaiian fruit fly)).